Consider the following 301-residue polypeptide: PWI domain-containing protein C825.05c (301 aa).

The PWI domain occupies 26–137 (STKFPASYDT…YGIPEKFILE (112 aa)). Position 86 is a phosphoserine (Ser-86). 3 stretches are compositionally biased toward basic and acidic residues: residues 145-182 (LKDRTEASKEESKTVTDHSNRRESRRESTYYDSRERNG), 189-205 (TLDRKRFHDASDTERNR), and 215-229 (RFSEKPRGERYDIRS). The tract at residues 145-301 (LKDRTEASKE…ESDSGTQKHD (157 aa)) is disordered. Ser-199 is subject to Phosphoserine. Basic residues predominate over residues 244–253 (PTRRRERHYR). A compositionally biased stretch (basic and acidic residues) spans 254-289 (TRDDEGFDEFGRSRDGRWRESRTSYREKHRYDRDAL). Positions 290–301 (SSESDSGTQKHD) are enriched in polar residues. The residue at position 291 (Ser-291) is a Phosphoserine.

Its subcellular location is the nucleus. This is PWI domain-containing protein C825.05c from Schizosaccharomyces pombe (strain 972 / ATCC 24843) (Fission yeast).